A 354-amino-acid polypeptide reads, in one-letter code: Protein REDOX 1 (354 aa).

Cysteine 44 is a binding site for Zn(2+). Histidine 45 to histidine 49 contacts NAD(+). Zn(2+) is bound by residues histidine 66, cysteine 97, cysteine 100, cysteine 103, and cysteine 111. NAD(+) contacts are provided by residues glycine 185–glycine 190, lysine 214, valine 271–alanine 273, serine 295–valine 297, and arginine 340.

It belongs to the zinc-containing alcohol dehydrogenase family. Zn(2+) serves as cofactor. As to expression, expressed in leaf epidermis.

It carries out the reaction 3,17-didehydrostemmadenine + NADPH + H2O = (16S)-deshydroxymethyl-stemmadenine + formate + NADP(+). The catalysed reaction is 3,17-didehydrostemmadenine + NADPH + H2O = (16R)-deshydroxymethyl-stemmadenine + formate + NADP(+). The enzyme catalyses 17-dehydrostemmadenine + NADP(+) = 3,17-didehydrostemmadenine + NADPH. The protein operates within alkaloid biosynthesis. In terms of biological role, component of iboga and aspidosperma monoterpenoid indole alkaloids (MIAs, e.g. tabersonine and catharanthine) biosynthesis pathway from 19E-geissoschizine. Catalyzes the first oxidation step of the unstable intermediate product resulting from the reaction triggered by the geissoschizine oxidase (GO) in the stemmadenine biosynthesis process from 19E-geissoschizine. The protein is Protein REDOX 1 of Catharanthus roseus (Madagascar periwinkle).